Consider the following 2164-residue polypeptide: Genome polyprotein (2164 aa).

Glycine 2 is lipidated: N-myristoyl glycine; by host. Residues 2–1477 (GAQVSRQNVG…DLGIANMTIG (1476 aa)) lie on the Cytoplasmic side of the membrane. Residues 208–239 (NVSVGYNHTHPGEQGREVVPSRTSSDNKRPSD) form a disordered region. The tract at residues 572–588 (LTQNPVENYIDSVLNEV) is amphipathic alpha-helix. Active-site for protease 2A activity residues include histidine 884 and aspartate 901. Zn(2+) is bound by residues cysteine 918 and cysteine 920. The active-site For protease 2A activity is the cysteine 972. Cysteine 978 and histidine 980 together coordinate Zn(2+). Residues 1104–1173 (SDSWLKKFTE…TIRLAPASVQ (70 aa)) form a membrane-binding region. The segment at 1104-1237 (SDSWLKKFTE…SPGTGKSLAT (134 aa)) is oligomerization. Positions 1125–1129 (GQKIS) are RNA-binding. An SF3 helicase domain is found at 1197–1357 (EARRIKNLYI…KEYLLDGKLD (161 aa)). 1227-1234 (GSPGTGKS) is an ATP binding site. Residues cysteine 1365, cysteine 1376, and cysteine 1381 each coordinate Zn(2+). The segment at 1365–1381 (CDVNIKIGNAKCCPFIC) adopts a C4-type; degenerate zinc-finger fold. The interval 1408 to 1415 (EDRRRSSA) is RNA-binding. Residues 1419-1424 (MEAIFQ) are oligomerization. Residues 1478–1493 (IIANVVSIVGVIYIIY) lie within the membrane without spanning it. Residues 1494–2164 (KLFCTLQGPY…VLEHEWYEKF (671 aa)) lie on the Cytoplasmic side of the membrane. Tyrosine 1503 is subject to O-(5'-phospho-RNA)-tyrosine. The region spanning 1522 to 1700 (GPEEEFGRSL…FSAMLLKSYF (179 aa)) is the Peptidase C3 domain. Active-site for protease 3C activity residues include histidine 1561, glutamate 1592, and cysteine 1668. Positions 1932–2045 (ECLMAFDYSN…SYNFKLDMAV (114 aa)) constitute a RdRp catalytic domain. Residues aspartate 1938 and aspartate 2031 each contribute to the Mg(2+) site.

The protein belongs to the picornaviruses polyprotein family. Interacts with capsid protein VP1 and capsid protein VP3 to form heterotrimeric protomers. In terms of assembly, interacts with capsid protein VP0, and capsid protein VP3 to form heterotrimeric protomers. Five protomers subsequently associate to form pentamers which serve as building blocks for the capsid. Interacts with capsid protein VP2, capsid protein VP3 and capsid protein VP4 following cleavage of capsid protein VP0. As to quaternary structure, interacts with capsid protein VP1 and capsid protein VP3 in the mature capsid. Interacts with capsid protein VP0 and capsid protein VP1 to form heterotrimeric protomers. Five protomers subsequently associate to form pentamers which serve as building blocks for the capsid. Interacts with capsid protein VP4 in the mature capsid. Interacts with protein 2C; this interaction may be important for virion morphogenesis. In terms of assembly, interacts with capsid protein VP1 and capsid protein VP3. As to quaternary structure, homodimer. Homohexamer; forms a hexameric ring structure with 6-fold symmetry characteristic of AAA+ ATPases. Interacts (via N-terminus) with host RTN3 (via reticulon domain); this interaction is important for viral replication. Interacts with capsid protein VP3; this interaction may be important for virion morphogenesis. In terms of assembly, interacts with protein 3CD. As to quaternary structure, homodimer. Interacts with host GBF1. Interacts (via GOLD domain) with host ACBD3 (via GOLD domain); this interaction allows the formation of a viral protein 3A/ACBD3 heterotetramer with a 2:2 stoichiometry, which will stimulate the recruitment of host PI4KB in order to synthesize PI4P at the viral RNA replication sites. Interacts with RNA-directed RNA polymerase. In terms of assembly, interacts with protein 3AB and with RNA-directed RNA polymerase. As to quaternary structure, interacts with Viral protein genome-linked and with protein 3CD. Mg(2+) serves as cofactor. Post-translationally, specific enzymatic cleavages in vivo by the viral proteases yield processing intermediates and the mature proteins. In terms of processing, myristoylation is required for the formation of pentamers during virus assembly. Further assembly of 12 pentamers and a molecule of genomic RNA generates the provirion. During virion maturation, immature virions are rendered infectious following cleavage of VP0 into VP4 and VP2. This maturation seems to be an autocatalytic event triggered by the presence of RNA in the capsid and it is followed by a conformational change infectious virion. Post-translationally, myristoylation is required during RNA encapsidation and formation of the mature virus particle. In terms of processing, VPg is uridylylated by the polymerase into VPg-pUpU. This acts as a nucleotide-peptide primer for the genomic RNA replication.

The protein resides in the virion. It is found in the host cytoplasm. The protein localises to the host cytoplasmic vesicle membrane. Its subcellular location is the host nucleus. It catalyses the reaction a ribonucleoside 5'-triphosphate + H2O = a ribonucleoside 5'-diphosphate + phosphate + H(+). The catalysed reaction is Selective cleavage of Tyr-|-Gly bond in the picornavirus polyprotein.. The enzyme catalyses RNA(n) + a ribonucleoside 5'-triphosphate = RNA(n+1) + diphosphate. It carries out the reaction Selective cleavage of Gln-|-Gly bond in the poliovirus polyprotein. In other picornavirus reactions Glu may be substituted for Gln, and Ser or Thr for Gly.. Replication or transcription is subject to high level of random mutations by the nucleotide analog ribavirin. Its function is as follows. Forms an icosahedral capsid of pseudo T=3 symmetry with capsid proteins VP2 and VP3. The capsid is 300 Angstroms in diameter, composed of 60 copies of each capsid protein and enclosing the viral positive strand RNA genome. Capsid protein VP1 mainly forms the vertices of the capsid. Capsid protein VP1 interacts with host cell receptor to provide virion attachment to target host cells. This attachment induces virion internalization. Tyrosine kinases are probably involved in the entry process. After binding to its receptor, the capsid undergoes conformational changes. Capsid protein VP1 N-terminus (that contains an amphipathic alpha-helix) and capsid protein VP4 are externalized. Together, they shape a pore in the host membrane through which viral genome is translocated to host cell cytoplasm. Forms an icosahedral capsid of pseudo T=3 symmetry with capsid proteins VP2 and VP3. The capsid is 300 Angstroms in diameter, composed of 60 copies of each capsid protein and enclosing the viral positive strand RNA genome. Functionally, lies on the inner surface of the capsid shell. After binding to the host receptor, the capsid undergoes conformational changes. Capsid protein VP4 is released, Capsid protein VP1 N-terminus is externalized, and together, they shape a pore in the host membrane through which the viral genome is translocated into the host cell cytoplasm. In terms of biological role, component of immature procapsids, which is cleaved into capsid proteins VP4 and VP2 after maturation. Allows the capsid to remain inactive before the maturation step. Its function is as follows. Cysteine protease that cleaves viral polyprotein and specific host proteins. It is responsible for the autocatalytic cleavage between the P1 and P2 regions, which is the first cleavage occurring in the polyprotein. Also cleaves the host translation initiation factor EIF4G1, in order to shut down the capped cellular mRNA translation. Inhibits the host nucleus-cytoplasm protein and RNA trafficking by cleaving host members of the nuclear pores. Counteracts stress granule formation probably by antagonizing its assembly or promoting its dissassembly. Plays an essential role in the virus replication cycle by acting as a viroporin. Creates a pore in the host endoplasmic reticulum and as a consequence releases Ca2+ in the cytoplasm of infected cell. In turn, high levels of cytoplasmic calcium may trigger membrane trafficking and transport of viral ER-associated proteins to viroplasms, sites of viral genome replication. Functionally, induces and associates with structural rearrangements of intracellular membranes. Displays RNA-binding, nucleotide binding and NTPase activities. May play a role in virion morphogenesis and viral RNA encapsidation by interacting with the capsid protein VP3. In terms of biological role, localizes the viral replication complex to the surface of membranous vesicles. Together with protein 3CD binds the Cis-Active RNA Element (CRE) which is involved in RNA synthesis initiation. Acts as a cofactor to stimulate the activity of 3D polymerase, maybe through a nucleid acid chaperone activity. Its function is as follows. Localizes the viral replication complex to the surface of membranous vesicles. It inhibits host cell endoplasmic reticulum-to-Golgi apparatus transport and causes the disassembly of the Golgi complex, possibly through GBF1 interaction. This would result in depletion of MHC, trail receptors and IFN receptors at the host cell surface. Plays an essential role in viral RNA replication by recruiting ACBD3 and PI4KB at the viral replication sites, thereby allowing the formation of the rearranged membranous structures where viral replication takes place. Acts as a primer for viral RNA replication and remains covalently bound to viral genomic RNA. VPg is uridylylated prior to priming replication into VPg-pUpU. The oriI viral genomic sequence may act as a template for this. The VPg-pUpU is then used as primer on the genomic RNA poly(A) by the RNA-dependent RNA polymerase to replicate the viral genome. During genome replication, the VPg-RNA linkage is removed by the host TDP2, thereby accelerating replication. During the late stage of the replication cycle, host TDP2 is excluded from sites of viral RNA synthesis and encapsidation, allowing for the generation of progeny virions. Functionally, involved in the viral replication complex and viral polypeptide maturation. It exhibits protease activity with a specificity and catalytic efficiency that is different from protease 3C. Protein 3CD lacks polymerase activity. Protein 3CD binds to the 5'UTR of the viral genome. In terms of biological role, replicates the viral genomic RNA on the surface of intracellular membranes. May form linear arrays of subunits that propagate along a strong head-to-tail interaction called interface-I. Covalently attaches UMP to a tyrosine of VPg, which is used to prime RNA synthesis. The positive stranded RNA genome is first replicated at virus induced membranous vesicles, creating a dsRNA genomic replication form. This dsRNA is then used as template to synthesize positive stranded RNA genomes. ss(+)RNA genomes are either translated, replicated or encapsidated. Its function is as follows. Major viral protease that mediates proteolytic processing of the polyprotein. Cleaves host EIF5B, contributing to host translation shutoff. Also cleaves host PABPC1, contributing to host translation shutoff. Cleaves host NLRP1, triggers host N-glycine-mediated degradation of the autoinhibitory NLRP1 N-terminal fragment. This Human rhinovirus A serotype 89 (strain 41467-Gallo) (HRV-89) protein is Genome polyprotein.